We begin with the raw amino-acid sequence, 345 residues long: Beta-hexosaminidase (345 aa).

Substrate contacts are provided by residues D60, R68, R132, and 162 to 163; that span reads KH. H175 (proton donor/acceptor) is an active-site residue. D247 serves as the catalytic Nucleophile.

Belongs to the glycosyl hydrolase 3 family. NagZ subfamily.

It localises to the cytoplasm. The enzyme catalyses Hydrolysis of terminal non-reducing N-acetyl-D-hexosamine residues in N-acetyl-beta-D-hexosaminides.. The protein operates within cell wall biogenesis; peptidoglycan recycling. Functionally, plays a role in peptidoglycan recycling by cleaving the terminal beta-1,4-linked N-acetylglucosamine (GlcNAc) from peptide-linked peptidoglycan fragments, giving rise to free GlcNAc, anhydro-N-acetylmuramic acid and anhydro-N-acetylmuramic acid-linked peptides. This chain is Beta-hexosaminidase, found in Actinobacillus pleuropneumoniae serotype 5b (strain L20).